A 382-amino-acid chain; its full sequence is Chaperone protein DnaJ (382 aa).

One can recognise a J domain in the interval 5–69; sequence DYYEILGVSK…EKRARYDRFG (65 aa). The segment at 137 to 219 adopts a CR-type zinc-finger fold; the sequence is GKETEIEIPR…CGGTGRVKRR (83 aa). The Zn(2+) site is built by Cys-150, Cys-153, Cys-167, Cys-170, Cys-193, Cys-196, Cys-207, and Cys-210. CXXCXGXG motif repeat units lie at residues 150–157, 167–174, 193–200, and 207–214; these read CDTCQGSG, CPHCHGSG, CPVCGGTG, and CPTCGGTG. The interval 154–175 is disordered; the sequence is QGSGAKPGTSPTSCPHCHGSGQ.

It belongs to the DnaJ family. Homodimer. The cofactor is Zn(2+).

It localises to the cytoplasm. In terms of biological role, participates actively in the response to hyperosmotic and heat shock by preventing the aggregation of stress-denatured proteins and by disaggregating proteins, also in an autonomous, DnaK-independent fashion. Unfolded proteins bind initially to DnaJ; upon interaction with the DnaJ-bound protein, DnaK hydrolyzes its bound ATP, resulting in the formation of a stable complex. GrpE releases ADP from DnaK; ATP binding to DnaK triggers the release of the substrate protein, thus completing the reaction cycle. Several rounds of ATP-dependent interactions between DnaJ, DnaK and GrpE are required for fully efficient folding. Also involved, together with DnaK and GrpE, in the DNA replication of plasmids through activation of initiation proteins. The sequence is that of Chaperone protein DnaJ from Geobacillus kaustophilus (strain HTA426).